Reading from the N-terminus, the 150-residue chain is UPF0756 membrane protein ABAYE1440 (150 aa).

The next 4 membrane-spanning stretches (helical) occupy residues 1-21 (MLAQ…CGLL), 45-65 (FFPY…TIGV), 83-103 (FISF…WLGG), and 115-135 (VVAG…GVPV).

The protein belongs to the UPF0756 family.

It localises to the cell membrane. The polypeptide is UPF0756 membrane protein ABAYE1440 (Acinetobacter baumannii (strain AYE)).